Here is a 522-residue protein sequence, read N- to C-terminus: Anthranilate synthase component 1 (522 aa).

L-tryptophan is bound by residues S40 and 292 to 294 (PYM). 329–330 (GT) lines the chorismate pocket. E362 is a binding site for Mg(2+). Residues Y450, R470, 484 to 486 (GAG), and G486 contribute to the chorismate site. E499 lines the Mg(2+) pocket.

The protein belongs to the anthranilate synthase component I family. In terms of assembly, heterotetramer consisting of two non-identical subunits: a beta subunit (TrpG) and a large alpha subunit (TrpE). It depends on Mg(2+) as a cofactor.

It carries out the reaction chorismate + L-glutamine = anthranilate + pyruvate + L-glutamate + H(+). Its pathway is amino-acid biosynthesis; L-tryptophan biosynthesis; L-tryptophan from chorismate: step 1/5. Its activity is regulated as follows. Feedback inhibited by tryptophan. In terms of biological role, part of a heterotetrameric complex that catalyzes the two-step biosynthesis of anthranilate, an intermediate in the biosynthesis of L-tryptophan. In the first step, the glutamine-binding beta subunit (TrpG) of anthranilate synthase (AS) provides the glutamine amidotransferase activity which generates ammonia as a substrate that, along with chorismate, is used in the second step, catalyzed by the large alpha subunit of AS (TrpE) to produce anthranilate. In the absence of TrpG, TrpE can synthesize anthranilate directly from chorismate and high concentrations of ammonia. This Buchnera aphidicola subsp. Baizongia pistaciae (strain Bp) protein is Anthranilate synthase component 1 (trpE).